A 155-amino-acid polypeptide reads, in one-letter code: Ribosomal RNA large subunit methyltransferase H (155 aa).

S-adenosyl-L-methionine contacts are provided by residues Leu72, Gly103, and 122–127 (LSALTL).

The protein belongs to the RNA methyltransferase RlmH family. As to quaternary structure, homodimer.

Its subcellular location is the cytoplasm. It carries out the reaction pseudouridine(1915) in 23S rRNA + S-adenosyl-L-methionine = N(3)-methylpseudouridine(1915) in 23S rRNA + S-adenosyl-L-homocysteine + H(+). Functionally, specifically methylates the pseudouridine at position 1915 (m3Psi1915) in 23S rRNA. In Salmonella dublin (strain CT_02021853), this protein is Ribosomal RNA large subunit methyltransferase H.